A 278-amino-acid chain; its full sequence is MCRRPDCGFSFSPGPVILLWCCLLLPIVSSAAVSVAPTAAEKVPAECPELTRRCLLGEVFQGDKYESWLRPLVNVTGRDGPLSQLIRYRPVTPEAANSVLLDEAFLDTLALLYNNPDQLRALLTLLSSDTAPRWMTVMRGYSECGDGSPAVYTCVDDLCRGYDLTRLSYGRSIFTEHVLGFELVPPSLFNVVVAIRNEATRTNRAVRLPVSTAAAPEGITLFYGLYNGVKEFCLRHQLDPPLLRHLDKYYAGLPPELKQTRVNLPAHSRYGPQAVDAR.

Positions 1–30 (MCRRPDCGFSFSPGPVILLWCCLLLPIVSS) are cleaved as a signal peptide. The region spanning 43-256 (VPAECPELTR…DKYYAGLPPE (214 aa)) is the gL betaherpesvirus-type domain. A disulfide bond links Cys-154 and Cys-159.

This sequence belongs to the herpesviridae glycoprotein L (gL) family. Betaherpesvirinae gL subfamily. Interacts with glycoprotein H (gH); this interaction is necessary for the correct processing and cell surface expression of gH. Forms the envelope pentamer complex (PC) composed of gH, gL, UL128, UL130, and UL131A. The pentamer interacts with host NRP2. Forms the envelope trimer complex composed of gH, gL, and gO. The trimer interacts with host PDGFRA. The trimer also interacts with host EPHA2.

It is found in the virion membrane. The protein localises to the host cell membrane. The protein resides in the host Golgi apparatus. Its subcellular location is the host trans-Golgi network. The heterodimer glycoprotein H-glycoprotein L is required for the fusion of viral and plasma membranes leading to virus entry into the host cell. Acts as a functional inhibitor of gH and maintains gH in an inhibited form. Upon binding to host integrins, gL dissociates from gH leading to activation of the viral fusion glycoproteins gB and gH. In human cytomegalovirus, forms two distincts complexes to mediate viral entry, a trimer and a pentamer at the surface of the virion envelope. The gH-gL-gO trimer is required for infection in fibroblasts by interacting with host PDGFRA, and in glioblastoma cells by interacting with host EPHA2. The gH-gL-UL128-UL130-UL131A pentamer is essential for viral entry in epithelial, endothelial and myeloid cells via interaction with host NRP2. The polypeptide is Envelope glycoprotein L (Homo sapiens (Human)).